A 508-amino-acid chain; its full sequence is Maturase K (508 aa).

The protein belongs to the intron maturase 2 family. MatK subfamily.

The protein resides in the plastid. The protein localises to the chloroplast. Its function is as follows. Usually encoded in the trnK tRNA gene intron. Probably assists in splicing its own and other chloroplast group II introns. In Verbena rigida (Tuberous vervain), this protein is Maturase K.